The sequence spans 405 residues: Cysteine desulfurase IscS (405 aa).

Pyridoxal 5'-phosphate is bound at residue Asn156. Lys207 carries the N6-(pyridoxal phosphate)lysine modification. The active-site Cysteine persulfide intermediate is Cys329. A [2Fe-2S] cluster-binding site is contributed by Cys329.

It belongs to the class-V pyridoxal-phosphate-dependent aminotransferase family. NifS/IscS subfamily. As to quaternary structure, homodimer. Forms a heterotetramer with IscU, interacts with other sulfur acceptors. It depends on pyridoxal 5'-phosphate as a cofactor.

The protein resides in the cytoplasm. The catalysed reaction is (sulfur carrier)-H + L-cysteine = (sulfur carrier)-SH + L-alanine. The protein operates within cofactor biosynthesis; iron-sulfur cluster biosynthesis. Master enzyme that delivers sulfur to a number of partners involved in Fe-S cluster assembly, tRNA modification or cofactor biosynthesis. Catalyzes the removal of elemental sulfur atoms from cysteine to produce alanine. Functions as a sulfur delivery protein for Fe-S cluster synthesis onto IscU, an Fe-S scaffold assembly protein, as well as other S acceptor proteins. The polypeptide is Cysteine desulfurase IscS (Dechloromonas aromatica (strain RCB)).